Consider the following 404-residue polypeptide: Alpha-galactosidase A (404 aa).

The N-terminal stretch at 1–23 (MRKQLLLGLGLVSALLVSVQASA) is a signal peptide. Disulfide bonds link C45/C77 and C124/C154. Catalysis depends on D152, which acts as the Nucleophile. 185-189 (EWGDN) serves as a coordination point for substrate. D207 serves as the catalytic Proton donor.

Belongs to the glycosyl hydrolase 27 family.

It carries out the reaction Hydrolysis of terminal, non-reducing alpha-D-galactose residues in alpha-D-galactosides, including galactose oligosaccharides, galactomannans and galactolipids.. Its function is as follows. Hydrolyzes galactomannan found in plant cell wall, by cleaving alpha-1,6-D-galactose side-chains from the mannan backbone. Appears to act in synergy with mannanase (ManA) to elicit hydrolysis of galactomannan. Has greater activity against galactomannans with decreased degree of polymerisation values. To a lesser extent, is also able to degrade other galactosides containing alpha-1,6-linked D-galactose, such as melibiose and stachyose. This chain is Alpha-galactosidase A (agaA), found in Cellvibrio japonicus (strain Ueda107) (Pseudomonas fluorescens subsp. cellulosa).